Here is a 396-residue protein sequence, read N- to C-terminus: Flavohemoprotein (396 aa).

Residues 1–136 form the Globin domain; the sequence is MLDAQTIATV…LANVFIHREA (136 aa). H85 provides a ligand contact to heme b. Residues Y95 and E135 each act as charge relay system in the active site. Positions 147 to 396 are reductase; it reads GGWEGTRPFR…YECFGPHKVL (250 aa). In terms of domain architecture, FAD-binding FR-type spans 150-255; sequence EGTRPFRIVA…AAPAGDFFMN (106 aa). Residues Y188 and 204–207 each bind FAD; that span reads RQYS. 268–273 contributes to the NADP(+) binding site; it reads GVGQTP. 389–392 is an FAD binding site; that stretch reads CFGP.

The protein belongs to the globin family. Two-domain flavohemoproteins subfamily. In the C-terminal section; belongs to the flavoprotein pyridine nucleotide cytochrome reductase family. Monomer. Requires heme b as cofactor. FAD serves as cofactor.

The enzyme catalyses 2 nitric oxide + NADPH + 2 O2 = 2 nitrate + NADP(+) + H(+). It catalyses the reaction 2 nitric oxide + NADH + 2 O2 = 2 nitrate + NAD(+) + H(+). In terms of biological role, is involved in NO detoxification in an aerobic process, termed nitric oxide dioxygenase (NOD) reaction that utilizes O(2) and NAD(P)H to convert NO to nitrate, which protects the bacterium from various noxious nitrogen compounds. Therefore, plays a central role in the inducible response to nitrosative stress. This Salmonella typhimurium (strain LT2 / SGSC1412 / ATCC 700720) protein is Flavohemoprotein (hmp).